The sequence spans 274 residues: HTH-type transcriptional regulator GadX (274 aa).

The HTH araC/xylS-type domain occupies 145–242; sequence TRVCTVINNN…GMTPTEYQER (98 aa). 2 consecutive DNA-binding regions (H-T-H motif) follow at residues 162 to 183 and 209 to 232; these read ARIA…REEE and IKRV…RNYY.

In terms of assembly, homodimer.

Functionally, positively regulates the expression of about fifteen genes involved in acid resistance such as gadA, gadB and gadC. Depending on the conditions (growth phase and medium), can repress gadW. The chain is HTH-type transcriptional regulator GadX (gadX) from Escherichia coli (strain K12).